The following is a 554-amino-acid chain: Undecaprenyl phosphate-alpha-4-amino-4-deoxy-L-arabinose arabinosyl transferase (554 aa).

Helical transmembrane passes span Leu-4–Val-24, Phe-87–Leu-107, Val-115–Val-135, Phe-178–Ile-198, Leu-206–Leu-226, Tyr-262–Phe-282, Glu-293–Gly-313, Leu-315–Thr-335, Val-351–Leu-371, Gln-384–Leu-404, and Ala-414–Val-434.

Belongs to the glycosyltransferase 83 family.

The protein resides in the cell inner membrane. The enzyme catalyses 4-amino-4-deoxy-alpha-L-arabinopyranosyl di-trans,octa-cis-undecaprenyl phosphate + lipid IVA = lipid IIA + di-trans,octa-cis-undecaprenyl phosphate.. Its pathway is lipopolysaccharide metabolism; 4-amino-4-deoxy-beta-L-arabinose-lipid A biosynthesis. Functionally, catalyzes the transfer of the L-Ara4N moiety of the glycolipid undecaprenyl phosphate-alpha-L-Ara4N to lipid A. The modified arabinose is attached to lipid A and is required for resistance to polymyxin and cationic antimicrobial peptides. This chain is Undecaprenyl phosphate-alpha-4-amino-4-deoxy-L-arabinose arabinosyl transferase, found in Yersinia pseudotuberculosis serotype O:3 (strain YPIII).